The following is a 314-amino-acid chain: Coiled-coil domain-containing protein 42 like-2 (314 aa).

2 coiled-coil regions span residues 34–139 (RLLE…RQEK) and 175–233 (NKLL…WESR).

It belongs to the CFAP73 family.

In Xenopus laevis (African clawed frog), this protein is Coiled-coil domain-containing protein 42 like-2.